Here is a 664-residue protein sequence, read N- to C-terminus: DCC-interacting protein 13-beta (664 aa).

The tract at residues 1 to 428 (MPAVDKLLLE…NSEMENENDK (428 aa)) is required for RAB5A binding. The 266-residue stretch at 3 to 268 (AVDKLLLEEA…ESVYTPDSDV (266 aa)) folds into the BAR domain. Positions 277 to 375 (LIQKAGYLNL…WICAINNISR (99 aa)) constitute a PH domain. The PID domain occupies 488–637 (SLLQQMFIVR…LMLSIPLTND (150 aa)). Positions 643 to 664 (LNDQPDDDDGNPNEHRGAESEA) are disordered. Positions 654-664 (PNEHRGAESEA) are enriched in basic and acidic residues.

As to quaternary structure, homodimer. Homotetramer. Binds RAB5A/Rab5 through an N-terminal domain. This interaction is essential for its recruitment to endosomal membranes as well as its role in cell proliferation. Binds subunits of the NuRD/MeCP1 complex. Interacts with FSHR; interaction is independent of follicle stimulating hormone stimulation. Interacts with APPL1; the interaction is decreased by adiponectin in a time-dependent manner. Forms a complex comprising APPL1, RUVBL2, CTNNB1, HDAC1 and HDAC2; interaction reduces interaction between CTNNB1, HDAC1, HDAC2 and RUVBL2 leading to the decrease of deacetylase activity of this complex; affects the recruitment of repressive complexes to the Wnt target genes. Interacts (via BAR domain) with TBC1D1; interaction is dependent of TBC1D1 phosphorylation at 'Ser-235'; interaction diminishes the phosphorylation of TBC1D1 at 'Thr-596', resulting in inhibition of SLC2A4 translocation and glucose uptake. Interacts with ANXA2; targets APPL2 to endosomes and acting in parallel to RAB5A. Interacts with RAB31 (in GTP-bound form); interaction contributes to or enhances recruitment of APPL2 to the phagosomes; interaction enhances Fc-gamma receptor-mediated phagocytosis through PI3K/Akt signaling in macrophages. Interacts with PIK3R1; forms a complex with PIK3R1 and APPL1. Interacts (via BAR domain) with ADIPOR1; hinders the accessibility of APPL1 to ADIPOR1; negatively regulates adiponectin signaling; ADIPOQ dissociates this interaction and facilitates the recruitment of APPL1 to ADIPOR1. Interacts (via BAR domain) with ADIPOR2; ADIPOQ dissociates this interaction. As to expression, high levels in brain, heart, kidney and skeletal muscle.

Its subcellular location is the early endosome membrane. It is found in the nucleus. It localises to the cell membrane. The protein localises to the endosome membrane. The protein resides in the cytoplasm. Its subcellular location is the cytoplasmic vesicle. It is found in the phagosome. It localises to the cell projection. The protein localises to the ruffle. The protein resides in the ruffle membrane. Its subcellular location is the phagosome membrane. Multifunctional adapter protein that binds to various membrane receptors, nuclear factors and signaling proteins to regulate many processes, such as cell proliferation, immune response, endosomal trafficking and cell metabolism. Regulates signaling pathway leading to cell proliferation through interaction with RAB5A and subunits of the NuRD/MeCP1 complex. Plays a role in immune response by modulating phagocytosis, inflammatory and innate immune responses. In macrophages, enhances Fc-gamma receptor-mediated phagocytosis through interaction with RAB31 leading to activation of PI3K/Akt signaling. In response to LPS, modulates inflammatory responses by playing a key role on the regulation of TLR4 signaling and in the nuclear translocation of RELA/NF-kappa-B p65 and the secretion of pro- and anti-inflammatory cytokines. Also functions as a negative regulator of innate immune response via inhibition of AKT1 signaling pathway by forming a complex with APPL1 and PIK3R1. Plays a role in endosomal trafficking of TGFBR1 from the endosomes to the nucleus. Plays a role in cell metabolism by regulating adiponecting ans insulin signaling pathways and adaptative thermogenesis. In muscle, negatively regulates adiponectin-simulated glucose uptake and fatty acid oxidation by inhibiting adiponectin signaling pathway through APPL1 sequestration thereby antagonizing APPL1 action. In muscles, negatively regulates insulin-induced plasma membrane recruitment of GLUT4 and glucose uptake through interaction with TBC1D1. Plays a role in cold and diet-induced adaptive thermogenesis by activating ventromedial hypothalamus (VMH) neurons throught AMPK inhibition which enhances sympathetic outflow to subcutaneous white adipose tissue (sWAT), sWAT beiging and cold tolerance. Also plays a role in other signaling pathways namely Wnt/beta-catenin, HGF and glucocorticoid receptor signaling. Positive regulator of beta-catenin/TCF-dependent transcription through direct interaction with RUVBL2/reptin resulting in the relief of RUVBL2-mediated repression of beta-catenin/TCF target genes by modulating the interactions within the beta-catenin-reptin-HDAC complex. May affect adult neurogenesis in hippocampus and olfactory system via regulating the sensitivity of glucocorticoid receptor. Required for fibroblast migration through HGF cell signaling. The polypeptide is DCC-interacting protein 13-beta (Homo sapiens (Human)).